Consider the following 55-residue polypeptide: Large ribosomal subunit protein bL33 (55 aa).

Belongs to the bacterial ribosomal protein bL33 family.

This is Large ribosomal subunit protein bL33 from Polaromonas sp. (strain JS666 / ATCC BAA-500).